The following is a 335-amino-acid chain: Probable cyclin-H (335 aa).

Belongs to the cyclin family. Cyclin C subfamily.

The protein resides in the nucleus. Its function is as follows. Regulates CDK7, the catalytic subunit of the CDK-activating kinase (CAK) enzymatic complex. In Echinococcus multilocularis (Fox tapeworm), this protein is Probable cyclin-H (CYCH).